Reading from the N-terminus, the 196-residue chain is Beta-crystallin A4 (196 aa).

Threonine 2 is modified (N-acetylthreonine). Positions 2–11 are N-terminal arm; sequence TLQCTKSAGH. Beta/gamma crystallin 'Greek key' domains follow at residues 12-51 and 52-98; these read WRMV…KVLS and GAWV…RPVA. Positions 99-104 are connecting peptide; that stretch reads CANHRD. Beta/gamma crystallin 'Greek key' domains are found at residues 105–146 and 147–195; these read SRLT…HVQS and GAWV…RRIQ.

It belongs to the beta/gamma-crystallin family. Homo/heterodimer, or complexes of higher-order. The structure of beta-crystallin oligomers seems to be stabilized through interactions between the N-terminal arms.

Crystallins are the dominant structural components of the vertebrate eye lens. In Mus musculus (Mouse), this protein is Beta-crystallin A4 (Cryba4).